We begin with the raw amino-acid sequence, 526 residues long: Na(+)/H(+) antiporter NhaB (526 aa).

The next 13 membrane-spanning stretches (helical) occupy residues 14-34 (FLGYAPDWYKLTIFGFLLINP), 35-55 (LLFYFVSPFWAGWLLVVEFIF), 99-119 (MLLVFMVAGIYFMKQLLLFVF), 122-142 (LLLRIHSKPLLSLAFCMAAAF), 146-166 (FLDALTVIAVIISVAIGFYGI), 206-226 (LMMHAGVGTALGGVMTMVGEP), 239-259 (FVDFFLRMSPVTVPVFICGIL), 307-327 (AVIGVWLIIALAFHLAEVGLI), 328-348 (GLSVIIMATTFCGVTEEHAIG), 357-377 (FTALLTVFFAIVAVIIDQQLF), 397-417 (YLFNGLLSSISDNVFVGSVYI), 451-471 (ATPNGQAAFLFLLTSSLAPLI), and 479-499 (VIMALPYTIVMTLVGLLCVEF).

Belongs to the NhaB Na(+)/H(+) (TC 2.A.34) antiporter family.

The protein localises to the cell inner membrane. The catalysed reaction is 2 Na(+)(in) + 3 H(+)(out) = 2 Na(+)(out) + 3 H(+)(in). Na(+)/H(+) antiporter that extrudes sodium in exchange for external protons. The protein is Na(+)/H(+) antiporter NhaB of Pectobacterium atrosepticum (strain SCRI 1043 / ATCC BAA-672) (Erwinia carotovora subsp. atroseptica).